We begin with the raw amino-acid sequence, 201 residues long: Small ribosomal subunit protein uS4 (201 aa).

The tract at residues 19–41 (LVGGSSAYEKRPYPPGQHGRARI) is disordered. One can recognise an S4 RNA-binding domain in the interval 91 to 157 (SRLDNVVYRA…LPFEVARETA (67 aa)).

This sequence belongs to the universal ribosomal protein uS4 family. In terms of assembly, part of the 30S ribosomal subunit. Contacts protein S5. The interaction surface between S4 and S5 is involved in control of translational fidelity.

One of the primary rRNA binding proteins, it binds directly to 16S rRNA where it nucleates assembly of the body of the 30S subunit. Its function is as follows. With S5 and S12 plays an important role in translational accuracy. This Mycobacteroides abscessus (strain ATCC 19977 / DSM 44196 / CCUG 20993 / CIP 104536 / JCM 13569 / NCTC 13031 / TMC 1543 / L948) (Mycobacterium abscessus) protein is Small ribosomal subunit protein uS4.